Reading from the N-terminus, the 298-residue chain is Protoheme IX farnesyltransferase (298 aa).

9 helical membrane passes run 26–46, 52–72, 98–118, 120–140, 148–168, 174–194, 214–234, 241–261, and 278–298; these read VVGH…PGVP, FWAS…NHFL, VVGF…AFVN, LTAF…TVYL, IVIG…AVTG, ALLL…AYAI, IAFT…AGLM, SGEI…YYAI, and YSLV…YIVL.

This sequence belongs to the UbiA prenyltransferase family. Protoheme IX farnesyltransferase subfamily.

The protein resides in the cell inner membrane. The enzyme catalyses heme b + (2E,6E)-farnesyl diphosphate + H2O = Fe(II)-heme o + diphosphate. It participates in porphyrin-containing compound metabolism; heme O biosynthesis; heme O from protoheme: step 1/1. In terms of biological role, converts heme B (protoheme IX) to heme O by substitution of the vinyl group on carbon 2 of heme B porphyrin ring with a hydroxyethyl farnesyl side group. This is Protoheme IX farnesyltransferase from Methylococcus capsulatus (strain ATCC 33009 / NCIMB 11132 / Bath).